We begin with the raw amino-acid sequence, 216 residues long: Cytidylate kinase (216 aa).

Gly-7–Thr-15 is a binding site for ATP.

The protein belongs to the cytidylate kinase family. Type 1 subfamily.

The protein localises to the cytoplasm. It catalyses the reaction CMP + ATP = CDP + ADP. It carries out the reaction dCMP + ATP = dCDP + ADP. The sequence is that of Cytidylate kinase from Chlamydia trachomatis serovar A (strain ATCC VR-571B / DSM 19440 / HAR-13).